The following is a 503-amino-acid chain: EZH inhibitory protein (503 aa).

The segment covering Met1 to Asp16 has biased composition (basic and acidic residues). Disordered stretches follow at residues Met1 to Ala72, His97 to Ser462, and Val483 to Pro503. The segment covering Pro41–Ala72 has biased composition (low complexity). The segment covering His97–His107 has biased composition (basic and acidic residues). A compositionally biased stretch (polar residues) spans Tyr184–Gln197. The residue at position 259 (Ser259) is a Phosphoserine. Residues Leu345–Ala366 are compositionally biased toward low complexity. The segment at Trp401–Ser409 is sufficient for interaction with EZH2. A necessary and sufficient for inhibition of PRC2/EED-EZH1 and PRC2/EED-EZH2 complex activity region spans residues Ala403–Gln423. Over residues Ser428 to Pro453 the composition is skewed to low complexity.

As to quaternary structure, interacts with PRC2/EED-EZH1 complex member EZH1 and with PRC2/EED-EZH2 complex member EZH2; the interaction blocks EZH1/EZH2 methyltransferase activity. Interacts (via C-terminus) with SUZ12 which is a member of the PRC2/EED-EZH1 and PRC2/EED-EZH2 complexes. In terms of tissue distribution, in testis, detected in male germ cells inside the seminiferous tubules, especially in spermatogonia and round spermatids (at protein level). In the ovary, expressed in primordial follicles and oocytes but not the external follicle cells (at protein level).

The protein localises to the nucleus. Its subcellular location is the cytoplasm. Its function is as follows. Inhibits PRC2/EED-EZH1 and PRC2/EED-EZH2 complex function by inhibiting EZH1/EZH2 methyltransferase activity, thereby causing down-regulation of histone H3 trimethylation on 'Lys-27' (H3K27me3). Probably inhibits methyltransferase activity by limiting the stimulatory effect of cofactors such as AEBP2 and JARID2. Inhibits H3K27me3 deposition during spermatogenesis and oogenesis. In Homo sapiens (Human), this protein is EZH inhibitory protein.